We begin with the raw amino-acid sequence, 252 residues long: Trans-aconitate 2-methyltransferase (252 aa).

It belongs to the methyltransferase superfamily. Tam family.

The protein localises to the cytoplasm. It carries out the reaction trans-aconitate + S-adenosyl-L-methionine = (E)-3-(methoxycarbonyl)pent-2-enedioate + S-adenosyl-L-homocysteine. Catalyzes the S-adenosylmethionine monomethyl esterification of trans-aconitate. This is Trans-aconitate 2-methyltransferase from Escherichia coli O139:H28 (strain E24377A / ETEC).